Here is a 1396-residue protein sequence, read N- to C-terminus: ATP-dependent helicase/nuclease subunit A (1396 aa).

The tract at residues 1–25 (MNREALCHDDPIGHDRLRPDSIPRD) is disordered. The region spanning 26–532 (PKWTDEQWQA…IDLAKNFRSR (507 aa)) is the UvrD-like helicase ATP-binding domain. Residue 47 to 54 (AAAGAGKT) coordinates ATP. Disordered regions lie at residues 590–649 (DADG…GQPT) and 1171–1205 (HSPE…PSPD). Positions 615 to 920 (HKNIAKAGES…RIMSIHKSKG (306 aa)) constitute a UvrD-like helicase C-terminal domain. A compositionally biased stretch (low complexity) spans 1181–1199 (TPPSLEIPPSLETPPSLET).

Belongs to the helicase family. AddA subfamily. In terms of assembly, heterodimer of AddA and AddB/RexB. Mg(2+) serves as cofactor.

It catalyses the reaction Couples ATP hydrolysis with the unwinding of duplex DNA by translocating in the 3'-5' direction.. It carries out the reaction ATP + H2O = ADP + phosphate + H(+). Functionally, the heterodimer acts as both an ATP-dependent DNA helicase and an ATP-dependent, dual-direction single-stranded exonuclease. Recognizes the chi site generating a DNA molecule suitable for the initiation of homologous recombination. The AddA nuclease domain is required for chi fragment generation; this subunit has the helicase and 3' -&gt; 5' nuclease activities. This chain is ATP-dependent helicase/nuclease subunit A, found in Heliobacterium modesticaldum (strain ATCC 51547 / Ice1).